Here is a 169-residue protein sequence, read N- to C-terminus: N5-carboxyaminoimidazole ribonucleotide mutase (169 aa).

Substrate-binding residues include S16, D19, and R46.

It belongs to the AIR carboxylase family. Class I subfamily.

It carries out the reaction 5-carboxyamino-1-(5-phospho-D-ribosyl)imidazole + H(+) = 5-amino-1-(5-phospho-D-ribosyl)imidazole-4-carboxylate. The protein operates within purine metabolism; IMP biosynthesis via de novo pathway; 5-amino-1-(5-phospho-D-ribosyl)imidazole-4-carboxylate from 5-amino-1-(5-phospho-D-ribosyl)imidazole (N5-CAIR route): step 2/2. In terms of biological role, catalyzes the conversion of N5-carboxyaminoimidazole ribonucleotide (N5-CAIR) to 4-carboxy-5-aminoimidazole ribonucleotide (CAIR). This is N5-carboxyaminoimidazole ribonucleotide mutase from Escherichia coli O157:H7.